The primary structure comprises 873 residues: Calmodulin-dependent glutamylase SidJ (873 aa).

The segment at 16 to 90 (QSEDNPSETA…TTSTTKQKGP (75 aa)) is disordered. A compositionally biased stretch (polar residues) spans 22–58 (SETAVETTDVSTKIKTTDTTQEESSVKTKTVVPTQPG). Residues aspartate 542 and aspartate 545 each coordinate Mg(2+). The tract at residues 851-873 (NLSEKSDIDSEKPESERTTDKRL) is disordered.

Interacts with host calmodulin/CALM1; this interaction is required for glutamylase activity. Mg(2+) is required as a cofactor.

The enzyme catalyses L-glutamyl-[protein] + L-glutamate + ATP = gamma-L-glutamyl-L-glutamyl-[protein] + ADP + phosphate + H(+). It carries out the reaction (L-glutamyl)(n)-gamma-L-glutamyl-L-glutamyl-[protein] + L-glutamate + ATP = (L-glutamyl)(n+1)-gamma-L-glutamyl-L-glutamyl-[protein] + ADP + phosphate + H(+). Its activity is regulated as follows. Glytamylation catalyzed by SidJ requires host calmodulin and can be regulated by intracellular changes in Ca2+ concentrations. Also requires ATP. In terms of biological role, glutamylase that mediates the covalent attachment of glutamate moieties to SdeA on one of the catalytic residues that is required for its mono-ADP-ribosyltransferase activity. In turn, inhibits SdeA ubiquitinating activity. Also glutamylates related SdeB, SdeC and SidE. Glutamylase activity only occurs in the host since it requires host calmodulin. May also reverse the SdeA-mediated substrate ubiquitination by cleaving the phosphodiester bond that links phosphoribosylated ubiquitin to protein substrates via its deubiquitinase activity. The protein is Calmodulin-dependent glutamylase SidJ of Legionella pneumophila subsp. pneumophila (strain Philadelphia 1 / ATCC 33152 / DSM 7513).